The primary structure comprises 603 residues: MSFVIAAPETLVRAASDLANIGSTLGAANAAALGPTTELLAAGADEVSAAIASLFAAHGQAYQAVSAQMSAFHAQFVQTFTAGAGAYASAEAAAAAPLEGLLNIVNTPTQLLLGRPLIGNGANGAPGTGQAVGADGLLYGNGGAGGSGAPGQAGGPGGAAGLFGNGGAGGAGGDGPGNGAAGGAGGAGGLLFGSGGAGGPGGVGNTGTGGLGGDGGAAGLFGAGGIGGAGGPGFNGGAGGAGGRSGLFEVLAAGGAGGTGGLSVNGGTGGTGGTGGGGGLFSNGGAGGAGGFGVSGSAGGNGGTGGDGGIFTGNGGTGGTGGTGTGNQLVGGEGGADGAGGNAGILFGAGGIGGTGGTGLGAPDPGGTGGKGGVGGIGGAGALFGPGGAGGTGGFGASSADQMAGGIGGSGGSGGAAKLIGDGGAGGTGGDSVRGAAGSGGTGGTGGLIGDGGAGGAGGTGIEFGSVGGAGGAGGNAAGLSGAGGAGGAGGFGETAGDGGAGGNAGLFNGDGGAGGAGGLGIAGDGGNGGKGGKAGMVGNGGDGGAGGASVVANGGVGGSGGNATLIGNGGNGGNGGVGSAPGKGGAGGTAGLLGLNGSPGLS.

Residues 1-93 (MSFVIAAPET…AGAYASAEAA (93 aa)) form the PE domain. The disordered stretch occupies residues 309 to 333 (GIFTGNGGTGGTGGTGTGNQLVGGE).

Belongs to the mycobacterial PE family. PGRS subfamily.

This is an uncharacterized protein from Mycobacterium tuberculosis (strain CDC 1551 / Oshkosh).